We begin with the raw amino-acid sequence, 77 residues long: MANIKSAIKRAELNKVANERNAQQKSAMRTLIKKFEAAPTEELYRAASSSIDKAASKGLIHANKASRDKARLAAKLG.

It belongs to the bacterial ribosomal protein bS20 family.

Its function is as follows. Binds directly to 16S ribosomal RNA. The protein is Small ribosomal subunit protein bS20 of Lactococcus lactis subsp. lactis (strain IL1403) (Streptococcus lactis).